The following is a 272-amino-acid chain: tRNA pseudouridine synthase B (272 aa).

D38 functions as the Nucleophile in the catalytic mechanism.

This sequence belongs to the pseudouridine synthase TruB family. Type 1 subfamily.

The catalysed reaction is uridine(55) in tRNA = pseudouridine(55) in tRNA. Its function is as follows. Responsible for synthesis of pseudouridine from uracil-55 in the psi GC loop of transfer RNAs. This is tRNA pseudouridine synthase B from Campylobacter jejuni subsp. jejuni serotype O:2 (strain ATCC 700819 / NCTC 11168).